We begin with the raw amino-acid sequence, 126 residues long: Small ribosomal subunit protein uS8 (126 aa).

Belongs to the universal ribosomal protein uS8 family. In terms of assembly, part of the 30S ribosomal subunit. Contacts proteins S5 and S12.

In terms of biological role, one of the primary rRNA binding proteins, it binds directly to 16S rRNA central domain where it helps coordinate assembly of the platform of the 30S subunit. The chain is Small ribosomal subunit protein uS8 from Nitratidesulfovibrio vulgaris (strain DSM 19637 / Miyazaki F) (Desulfovibrio vulgaris).